We begin with the raw amino-acid sequence, 156 residues long: ATP synthase subunit b (156 aa).

Residues 11-31 traverse the membrane as a helical segment; that stretch reads AIAFVLFVLFCMKYVWPPLMA.

This sequence belongs to the ATPase B chain family. As to quaternary structure, F-type ATPases have 2 components, F(1) - the catalytic core - and F(0) - the membrane proton channel. F(1) has five subunits: alpha(3), beta(3), gamma(1), delta(1), epsilon(1). F(0) has three main subunits: a(1), b(2) and c(10-14). The alpha and beta chains form an alternating ring which encloses part of the gamma chain. F(1) is attached to F(0) by a central stalk formed by the gamma and epsilon chains, while a peripheral stalk is formed by the delta and b chains.

It is found in the cell inner membrane. Its function is as follows. F(1)F(0) ATP synthase produces ATP from ADP in the presence of a proton or sodium gradient. F-type ATPases consist of two structural domains, F(1) containing the extramembraneous catalytic core and F(0) containing the membrane proton channel, linked together by a central stalk and a peripheral stalk. During catalysis, ATP synthesis in the catalytic domain of F(1) is coupled via a rotary mechanism of the central stalk subunits to proton translocation. Functionally, component of the F(0) channel, it forms part of the peripheral stalk, linking F(1) to F(0). The chain is ATP synthase subunit b from Sodalis glossinidius (strain morsitans).